Here is a 456-residue protein sequence, read N- to C-terminus: Bifunctional protein GlmU (456 aa).

Positions 1–230 (MDKRFAVILA…FQETLGVNDR (230 aa)) are pyrophosphorylase. UDP-N-acetyl-alpha-D-glucosamine contacts are provided by residues 9–12 (LAAG), K23, Q73, and 78–79 (GT). D103 contacts Mg(2+). UDP-N-acetyl-alpha-D-glucosamine contacts are provided by G140, E155, N170, and N228. Residue N228 participates in Mg(2+) binding. Residues 231–251 (VALSQAEMYMKERINKRHMQN) form a linker region. The interval 252–456 (GVTLIDPMNT…EDYVKNIHKK (205 aa)) is N-acetyltransferase. UDP-N-acetyl-alpha-D-glucosamine contacts are provided by R333 and K351. The Proton acceptor role is filled by H363. The UDP-N-acetyl-alpha-D-glucosamine site is built by Y366 and N377. Acetyl-CoA contacts are provided by residues 386–387 (NY), A423, and R440.

This sequence in the N-terminal section; belongs to the N-acetylglucosamine-1-phosphate uridyltransferase family. In the C-terminal section; belongs to the transferase hexapeptide repeat family. In terms of assembly, homotrimer. Mg(2+) is required as a cofactor.

The protein resides in the cytoplasm. It carries out the reaction alpha-D-glucosamine 1-phosphate + acetyl-CoA = N-acetyl-alpha-D-glucosamine 1-phosphate + CoA + H(+). The enzyme catalyses N-acetyl-alpha-D-glucosamine 1-phosphate + UTP + H(+) = UDP-N-acetyl-alpha-D-glucosamine + diphosphate. It participates in nucleotide-sugar biosynthesis; UDP-N-acetyl-alpha-D-glucosamine biosynthesis; N-acetyl-alpha-D-glucosamine 1-phosphate from alpha-D-glucosamine 6-phosphate (route II): step 2/2. The protein operates within nucleotide-sugar biosynthesis; UDP-N-acetyl-alpha-D-glucosamine biosynthesis; UDP-N-acetyl-alpha-D-glucosamine from N-acetyl-alpha-D-glucosamine 1-phosphate: step 1/1. It functions in the pathway bacterial outer membrane biogenesis; LPS lipid A biosynthesis. In terms of biological role, catalyzes the last two sequential reactions in the de novo biosynthetic pathway for UDP-N-acetylglucosamine (UDP-GlcNAc). The C-terminal domain catalyzes the transfer of acetyl group from acetyl coenzyme A to glucosamine-1-phosphate (GlcN-1-P) to produce N-acetylglucosamine-1-phosphate (GlcNAc-1-P), which is converted into UDP-GlcNAc by the transfer of uridine 5-monophosphate (from uridine 5-triphosphate), a reaction catalyzed by the N-terminal domain. The polypeptide is Bifunctional protein GlmU (Bacillus velezensis (strain DSM 23117 / BGSC 10A6 / LMG 26770 / FZB42) (Bacillus amyloliquefaciens subsp. plantarum)).